Here is a 370-residue protein sequence, read N- to C-terminus: Anhydro-N-acetylmuramic acid kinase (370 aa).

Position 13–20 (13–20) interacts with ATP; that stretch reads GTSMDGVD.

Belongs to the anhydro-N-acetylmuramic acid kinase family.

It carries out the reaction 1,6-anhydro-N-acetyl-beta-muramate + ATP + H2O = N-acetyl-D-muramate 6-phosphate + ADP + H(+). It functions in the pathway amino-sugar metabolism; 1,6-anhydro-N-acetylmuramate degradation. Its pathway is cell wall biogenesis; peptidoglycan recycling. Catalyzes the specific phosphorylation of 1,6-anhydro-N-acetylmuramic acid (anhMurNAc) with the simultaneous cleavage of the 1,6-anhydro ring, generating MurNAc-6-P. Is required for the utilization of anhMurNAc either imported from the medium or derived from its own cell wall murein, and thus plays a role in cell wall recycling. The chain is Anhydro-N-acetylmuramic acid kinase from Vibrio vulnificus (strain YJ016).